The following is a 145-amino-acid chain: Large ribosomal subunit protein bL19 (145 aa).

Residues 112–130 (GKSARIKERRPAKAVEKTS) show a composition bias toward basic and acidic residues. Positions 112 to 145 (GKSARIKERRPAKAVEKTSKPASAKKPAAKANKK) are disordered.

It belongs to the bacterial ribosomal protein bL19 family.

Functionally, this protein is located at the 30S-50S ribosomal subunit interface and may play a role in the structure and function of the aminoacyl-tRNA binding site. The protein is Large ribosomal subunit protein bL19 of Malacoplasma penetrans (strain HF-2) (Mycoplasma penetrans).